The following is a 339-amino-acid chain: Holliday junction branch migration complex subunit RuvB (339 aa).

The interval 2–187 is large ATPase domain (RuvB-L); it reads KDVNDEERII…FGIIEHMQYY (186 aa). Residues Leu26, Arg27, Gly68, Lys71, Thr72, Thr73, 134 to 136, Arg177, Tyr187, and Arg224 contribute to the ATP site; that span reads EDF. Residue Thr72 participates in Mg(2+) binding. Positions 188-258 are small ATPAse domain (RuvB-S); the sequence is SIDDLEKIIQ…TTKHSLHLLE (71 aa). Residues 261 to 339 form a head domain (RuvB-H) region; that stretch reads DEGLDQTDRK…QLGYPPKKAE (79 aa). Arg316 and Arg321 together coordinate DNA.

This sequence belongs to the RuvB family. In terms of assembly, homohexamer. Forms an RuvA(8)-RuvB(12)-Holliday junction (HJ) complex. HJ DNA is sandwiched between 2 RuvA tetramers; dsDNA enters through RuvA and exits via RuvB. An RuvB hexamer assembles on each DNA strand where it exits the tetramer. Each RuvB hexamer is contacted by two RuvA subunits (via domain III) on 2 adjacent RuvB subunits; this complex drives branch migration. In the full resolvosome a probable DNA-RuvA(4)-RuvB(12)-RuvC(2) complex forms which resolves the HJ.

It is found in the cytoplasm. It carries out the reaction ATP + H2O = ADP + phosphate + H(+). The RuvA-RuvB-RuvC complex processes Holliday junction (HJ) DNA during genetic recombination and DNA repair, while the RuvA-RuvB complex plays an important role in the rescue of blocked DNA replication forks via replication fork reversal (RFR). RuvA specifically binds to HJ cruciform DNA, conferring on it an open structure. The RuvB hexamer acts as an ATP-dependent pump, pulling dsDNA into and through the RuvAB complex. RuvB forms 2 homohexamers on either side of HJ DNA bound by 1 or 2 RuvA tetramers; 4 subunits per hexamer contact DNA at a time. Coordinated motions by a converter formed by DNA-disengaged RuvB subunits stimulates ATP hydrolysis and nucleotide exchange. Immobilization of the converter enables RuvB to convert the ATP-contained energy into a lever motion, pulling 2 nucleotides of DNA out of the RuvA tetramer per ATP hydrolyzed, thus driving DNA branch migration. The RuvB motors rotate together with the DNA substrate, which together with the progressing nucleotide cycle form the mechanistic basis for DNA recombination by continuous HJ branch migration. Branch migration allows RuvC to scan DNA until it finds its consensus sequence, where it cleaves and resolves cruciform DNA. This chain is Holliday junction branch migration complex subunit RuvB, found in Lactobacillus gasseri (strain ATCC 33323 / DSM 20243 / BCRC 14619 / CIP 102991 / JCM 1131 / KCTC 3163 / NCIMB 11718 / NCTC 13722 / AM63).